A 192-amino-acid chain; its full sequence is Probable nicotinate-nucleotide adenylyltransferase (192 aa).

It belongs to the NadD family.

It catalyses the reaction nicotinate beta-D-ribonucleotide + ATP + H(+) = deamido-NAD(+) + diphosphate. It participates in cofactor biosynthesis; NAD(+) biosynthesis; deamido-NAD(+) from nicotinate D-ribonucleotide: step 1/1. Its function is as follows. Catalyzes the reversible adenylation of nicotinate mononucleotide (NaMN) to nicotinic acid adenine dinucleotide (NaAD). The protein is Probable nicotinate-nucleotide adenylyltransferase of Staphylococcus haemolyticus (strain JCSC1435).